Consider the following 184-residue polypeptide: MDKFLIDVIVEIPKNSKIKYEYDRQTGQIRVDRILFGSESYPQNYGFIKNTLDWDGDELDCFIFADQPFLPATVVPTRIVGALEMIDDGEIDTKLLGVIDCDPRYKEINQISDLPKHRIEEILIFLKTYKLLQKKTVIIKGLKDVCWAKKEYEICLQLMKDYGHLSKDQFIQKMQILHPEHYQK.

3 residues coordinate substrate: Lys-19, Arg-33, and Tyr-45. Residues Asp-55, Asp-60, and Asp-92 each contribute to the Mg(2+) site. Tyr-129 lines the substrate pocket.

It belongs to the PPase family. As to quaternary structure, homohexamer. Requires Mg(2+) as cofactor.

It localises to the cytoplasm. It catalyses the reaction diphosphate + H2O = 2 phosphate + H(+). In terms of biological role, catalyzes the hydrolysis of inorganic pyrophosphate (PPi) forming two phosphate ions. This Mycoplasma genitalium (strain ATCC 33530 / DSM 19775 / NCTC 10195 / G37) (Mycoplasmoides genitalium) protein is Inorganic pyrophosphatase.